Here is a 500-residue protein sequence, read N- to C-terminus: 7-alpha-hydroxycholest-4-en-3-one 12-alpha-hydroxylase (500 aa).

The helical transmembrane segment at 2-21 threads the bilayer; that stretch reads VLWGLLGALLMVMVGWLCLP. At serine 325 the chain carries Phosphoserine. Cysteine 439 provides a ligand contact to heme.

Belongs to the cytochrome P450 family. The cofactor is heme. As to expression, liver (at protein level).

The protein localises to the endoplasmic reticulum membrane. Its subcellular location is the microsome membrane. The enzyme catalyses 7alpha-hydroxycholest-4-en-3-one + reduced [NADPH--hemoprotein reductase] + O2 = 7alpha,12alpha-dihydroxycholest-4-en-3-one + oxidized [NADPH--hemoprotein reductase] + H2O + H(+). It carries out the reaction 5beta-cholestane-3alpha,7alpha-diol + reduced [NADPH--hemoprotein reductase] + O2 = 5beta-cholestane-3alpha,7alpha,12alpha-triol + oxidized [NADPH--hemoprotein reductase] + H2O + H(+). It catalyses the reaction chenodeoxycholate + reduced [NADPH--hemoprotein reductase] + O2 = cholate + oxidized [NADPH--hemoprotein reductase] + H2O + H(+). The protein operates within lipid metabolism; bile acid biosynthesis. Its activity is regulated as follows. Up-regulated upon treatment with streptozotocin. Its function is as follows. A cytochrome P450 monooxygenase involved in primary bile acid biosynthesis. Catalyzes the 12alpha-hydroxylation of 7alpha-hydroxy-4-cholesten-3-one, an intermediate metabolite in cholic acid biosynthesis. Controls biliary balance of cholic acid and chenodeoxycholic acid, ultimately regulating the intestinal absorption of dietary lipids. Mechanistically, uses molecular oxygen inserting one oxygen atom into a substrate, and reducing the second into a water molecule, with two electrons provided by NADPH via cytochrome P450 reductase (CPR; NADPH--hemoprotein reductase). The chain is 7-alpha-hydroxycholest-4-en-3-one 12-alpha-hydroxylase (CYP8B1) from Oryctolagus cuniculus (Rabbit).